Reading from the N-terminus, the 698-residue chain is Capon-like protein (698 aa).

Positions 25–194 (FFHGITFQAK…SELLDVEQIS (170 aa)) constitute a PID domain. The disordered stretch occupies residues 191–240 (EQISEQQLSEDGERGGGDNETPKKEHLAITPDLNHTQPQRPNHLDIMPSH). Residues 201–217 (DGERGGGDNETPKKEHL) are compositionally biased toward basic and acidic residues. Coiled-coil stretches lie at residues 265-327 (RSEI…LASL), 379-484 (NQQL…LNAN), and 554-583 (LNED…GNLA). Low complexity predominate over residues 396-423 (SQHLQNLQQQQQQQQQQQQQQTQAAPTA). The tract at residues 396 to 460 (SQHLQNLQQQ…QQQQQQQQDA (65 aa)) is disordered. Residues 436-447 (YPSMSALQSISN) show a composition bias toward polar residues. Over residues 448–458 (QLQQQQQQQQQ) the composition is skewed to low complexity. The interval 588–698 (GGSTSTRDTS…RTTWARHTTK (111 aa)) is disordered. Over residues 590 to 640 (STSTRDTSRSSSTLDSPSSPRLRSSNNNISPGSSNGNQNHNNNSNSNSSSS) the composition is skewed to low complexity. Polar residues-rich tracts occupy residues 662-672 (LSATPSFITRS) and 679-698 (NRSQ…HTTK).

As to expression, expressed at higher level in wing imaginal disk.

In terms of biological role, putative adapter protein. The chain is Capon-like protein from Drosophila melanogaster (Fruit fly).